Consider the following 473-residue polypeptide: Siroheme synthase (473 aa).

Residues 1 to 203 (MTLFPIFADL…QQPGLAEQEL (203 aa)) form a precorrin-2 dehydrogenase /sirohydrochlorin ferrochelatase region. NAD(+) is bound by residues 22-23 (AV) and 43-44 (PR). Position 128 is a phosphoserine (Ser-128). The uroporphyrinogen-III C-methyltransferase stretch occupies residues 216–473 (GSVVLVGAGP…GLPGPQALAA (258 aa)). Position 225 (Pro-225) interacts with S-adenosyl-L-methionine. The Proton acceptor role is filled by Asp-248. Catalysis depends on Lys-270, which acts as the Proton donor. S-adenosyl-L-methionine is bound by residues 302–304 (GGD), Ile-307, 332–333 (TA), Met-384, and Gly-413.

The protein in the N-terminal section; belongs to the precorrin-2 dehydrogenase / sirohydrochlorin ferrochelatase family. This sequence in the C-terminal section; belongs to the precorrin methyltransferase family.

The catalysed reaction is uroporphyrinogen III + 2 S-adenosyl-L-methionine = precorrin-2 + 2 S-adenosyl-L-homocysteine + H(+). It catalyses the reaction precorrin-2 + NAD(+) = sirohydrochlorin + NADH + 2 H(+). The enzyme catalyses siroheme + 2 H(+) = sirohydrochlorin + Fe(2+). Its pathway is cofactor biosynthesis; adenosylcobalamin biosynthesis; precorrin-2 from uroporphyrinogen III: step 1/1. The protein operates within cofactor biosynthesis; adenosylcobalamin biosynthesis; sirohydrochlorin from precorrin-2: step 1/1. It functions in the pathway porphyrin-containing compound metabolism; siroheme biosynthesis; precorrin-2 from uroporphyrinogen III: step 1/1. It participates in porphyrin-containing compound metabolism; siroheme biosynthesis; siroheme from sirohydrochlorin: step 1/1. Its pathway is porphyrin-containing compound metabolism; siroheme biosynthesis; sirohydrochlorin from precorrin-2: step 1/1. Its function is as follows. Multifunctional enzyme that catalyzes the SAM-dependent methylations of uroporphyrinogen III at position C-2 and C-7 to form precorrin-2 via precorrin-1. Then it catalyzes the NAD-dependent ring dehydrogenation of precorrin-2 to yield sirohydrochlorin. Finally, it catalyzes the ferrochelation of sirohydrochlorin to yield siroheme. The sequence is that of Siroheme synthase from Bordetella pertussis (strain Tohama I / ATCC BAA-589 / NCTC 13251).